A 456-amino-acid polypeptide reads, in one-letter code: Bifunctional protein GlmU (456 aa).

A pyrophosphorylase region spans residues Met1–Arg229. UDP-N-acetyl-alpha-D-glucosamine contacts are provided by residues Leu11–Gly14, Lys25, Gln76, Gly81–Thr82, Tyr103–Asp105, Gly140, Glu154, Asn169, and Asn227. Asp105 serves as a coordination point for Mg(2+). Asn227 contacts Mg(2+). A linker region spans residues Leu230–Ala250. The interval Gly251–Lys456 is N-acetyltransferase. UDP-N-acetyl-alpha-D-glucosamine is bound by residues Arg333 and Lys351. Catalysis depends on His363, which acts as the Proton acceptor. Positions 366 and 377 each coordinate UDP-N-acetyl-alpha-D-glucosamine. Acetyl-CoA is bound by residues Ala380, Asn386 to Tyr387, Ser405, Ala423, and Arg440.

It in the N-terminal section; belongs to the N-acetylglucosamine-1-phosphate uridyltransferase family. This sequence in the C-terminal section; belongs to the transferase hexapeptide repeat family. Homotrimer. The cofactor is Mg(2+).

It localises to the cytoplasm. The enzyme catalyses alpha-D-glucosamine 1-phosphate + acetyl-CoA = N-acetyl-alpha-D-glucosamine 1-phosphate + CoA + H(+). It catalyses the reaction N-acetyl-alpha-D-glucosamine 1-phosphate + UTP + H(+) = UDP-N-acetyl-alpha-D-glucosamine + diphosphate. It participates in nucleotide-sugar biosynthesis; UDP-N-acetyl-alpha-D-glucosamine biosynthesis; N-acetyl-alpha-D-glucosamine 1-phosphate from alpha-D-glucosamine 6-phosphate (route II): step 2/2. It functions in the pathway nucleotide-sugar biosynthesis; UDP-N-acetyl-alpha-D-glucosamine biosynthesis; UDP-N-acetyl-alpha-D-glucosamine from N-acetyl-alpha-D-glucosamine 1-phosphate: step 1/1. The protein operates within bacterial outer membrane biogenesis; LPS lipid A biosynthesis. Its function is as follows. Catalyzes the last two sequential reactions in the de novo biosynthetic pathway for UDP-N-acetylglucosamine (UDP-GlcNAc). The C-terminal domain catalyzes the transfer of acetyl group from acetyl coenzyme A to glucosamine-1-phosphate (GlcN-1-P) to produce N-acetylglucosamine-1-phosphate (GlcNAc-1-P), which is converted into UDP-GlcNAc by the transfer of uridine 5-monophosphate (from uridine 5-triphosphate), a reaction catalyzed by the N-terminal domain. The chain is Bifunctional protein GlmU from Escherichia coli O127:H6 (strain E2348/69 / EPEC).